The following is a 521-amino-acid chain: 3,4-dihydroxyphenylacetaldehyde synthase (521 aa).

Lys306 bears the N6-(pyridoxal phosphate)lysine mark.

The protein belongs to the group II decarboxylase family. Pyridoxal 5'-phosphate serves as cofactor. Highly expressed in the cuticle and midgut. Low expression in the head and thorax.

The enzyme catalyses L-dopa + O2 + H2O + H(+) = 3,4-dihydroxyphenylacetaldehyde + H2O2 + NH4(+) + CO2. In terms of biological role, catalyzes the decarboxylation-oxidative deamination of L-3,4-dihydroxyphenylalanine (L-DOPA) to 3,4-dihydroxylphenylacetaldehyde (DHPAA). Involved in cuticle development. Probably responsible for the protein cross-linking during the development of flexible cuticles. This chain is 3,4-dihydroxyphenylacetaldehyde synthase, found in Aedes aegypti (Yellowfever mosquito).